The primary structure comprises 142 residues: Large ribosomal subunit protein uL13 (142 aa).

The protein belongs to the universal ribosomal protein uL13 family. In terms of assembly, part of the 50S ribosomal subunit.

Functionally, this protein is one of the early assembly proteins of the 50S ribosomal subunit, although it is not seen to bind rRNA by itself. It is important during the early stages of 50S assembly. This is Large ribosomal subunit protein uL13 from Idiomarina loihiensis (strain ATCC BAA-735 / DSM 15497 / L2-TR).